A 461-amino-acid polypeptide reads, in one-letter code: Photosystem II CP43 reaction center protein (461 aa).

Positions 1–2 are excised as a propeptide; sequence ME. The residue at position 3 (threonine 3) is an N-acetylthreonine. A Phosphothreonine modification is found at threonine 3. The next 5 membrane-spanning stretches (helical) occupy residues 57–81, 122–143, 166–188, 243–263, and 279–300; these read LFEV…PHLA, IIGP…KDKN, KAMF…RVIS, KPFS…LSYS, and WFNN…ASQA. Glutamate 355 serves as a coordination point for [CaMn4O5] cluster. The helical transmembrane segment at 435-459 threads the bilayer; the sequence is RARAASGGFEKGLDRENEPVLSMKL.

The protein belongs to the PsbB/PsbC family. PsbC subfamily. PSII is composed of 1 copy each of membrane proteins PsbA, PsbB, PsbC, PsbD, PsbE, PsbF, PsbH, PsbI, PsbJ, PsbK, PsbL, PsbM, PsbT, PsbX, PsbY, PsbZ, Psb30/Ycf12, at least 3 peripheral proteins of the oxygen-evolving complex and a large number of cofactors. It forms dimeric complexes. Requires Binds multiple chlorophylls and provides some of the ligands for the Ca-4Mn-5O cluster of the oxygen-evolving complex. It may also provide a ligand for a Cl- that is required for oxygen evolution. PSII binds additional chlorophylls, carotenoids and specific lipids. as cofactor.

It is found in the plastid. It localises to the cyanelle thylakoid membrane. Its function is as follows. One of the components of the core complex of photosystem II (PSII). It binds chlorophyll and helps catalyze the primary light-induced photochemical processes of PSII. PSII is a light-driven water:plastoquinone oxidoreductase, using light energy to abstract electrons from H(2)O, generating O(2) and a proton gradient subsequently used for ATP formation. The chain is Photosystem II CP43 reaction center protein from Cyanophora paradoxa.